Reading from the N-terminus, the 63-residue chain is Small ribosomal subunit protein eS30B (63 aa).

Residues 1–35 (MAKVHGSLARAGKVKSQTPKVEKTEKPKKPKGRAY) are disordered. S16 bears the Phosphoserine mark. T48 carries the post-translational modification Phosphothreonine.

Belongs to the eukaryotic ribosomal protein eS30 family. In terms of assembly, component of the small ribosomal subunit (SSU). Mature yeast ribosomes consist of a small (40S) and a large (60S) subunit. The 40S small subunit contains 1 molecule of ribosomal RNA (18S rRNA) and 33 different proteins (encoded by 57 genes). The large 60S subunit contains 3 rRNA molecules (25S, 5.8S and 5S rRNA) and 46 different proteins (encoded by 81 genes).

The protein resides in the cytoplasm. Its function is as follows. Component of the ribosome, a large ribonucleoprotein complex responsible for the synthesis of proteins in the cell. The small ribosomal subunit (SSU) binds messenger RNAs (mRNAs) and translates the encoded message by selecting cognate aminoacyl-transfer RNA (tRNA) molecules. The large subunit (LSU) contains the ribosomal catalytic site termed the peptidyl transferase center (PTC), which catalyzes the formation of peptide bonds, thereby polymerizing the amino acids delivered by tRNAs into a polypeptide chain. The nascent polypeptides leave the ribosome through a tunnel in the LSU and interact with protein factors that function in enzymatic processing, targeting, and the membrane insertion of nascent chains at the exit of the ribosomal tunnel. This is Small ribosomal subunit protein eS30B from Saccharomyces cerevisiae (strain ATCC 204508 / S288c) (Baker's yeast).